A 302-amino-acid polypeptide reads, in one-letter code: Sulfate adenylyltransferase subunit 2 (302 aa).

Belongs to the PAPS reductase family. CysD subfamily. In terms of assembly, heterodimer composed of CysD, the smaller subunit, and CysN.

The enzyme catalyses sulfate + ATP + H(+) = adenosine 5'-phosphosulfate + diphosphate. It participates in sulfur metabolism; hydrogen sulfide biosynthesis; sulfite from sulfate: step 1/3. Functionally, with CysN forms the ATP sulfurylase (ATPS) that catalyzes the adenylation of sulfate producing adenosine 5'-phosphosulfate (APS) and diphosphate, the first enzymatic step in sulfur assimilation pathway. APS synthesis involves the formation of a high-energy phosphoric-sulfuric acid anhydride bond driven by GTP hydrolysis by CysN coupled to ATP hydrolysis by CysD. This is Sulfate adenylyltransferase subunit 2 from Salmonella agona (strain SL483).